A 507-amino-acid polypeptide reads, in one-letter code: Anthranilate synthase component 1 (507 aa).

Residue serine 65 participates in L-tryptophan binding. Serine 81 bears the Phosphoserine mark. At threonine 223 the chain carries Phosphothreonine. L-tryptophan is bound at residue 280 to 282; it reads PYL. 316-317 contributes to the chorismate binding site; the sequence is GT. Glutamate 343 is a binding site for Mg(2+). Residues tyrosine 431, arginine 452, 466–468, and glycine 468 each bind chorismate; that span reads GGG. Glutamate 481 lines the Mg(2+) pocket.

Belongs to the anthranilate synthase component I family. In terms of assembly, tetramer of two components I and two components II. It depends on Mg(2+) as a cofactor.

The catalysed reaction is chorismate + L-glutamine = anthranilate + pyruvate + L-glutamate + H(+). It functions in the pathway amino-acid biosynthesis; L-tryptophan biosynthesis; L-tryptophan from chorismate: step 1/5. This Saccharomyces cerevisiae (strain ATCC 204508 / S288c) (Baker's yeast) protein is Anthranilate synthase component 1 (TRP2).